The sequence spans 497 residues: 5'-AMP-activated protein kinase subunit gamma-3 (497 aa).

The segment at 16–143 is disordered; sequence STQTPSWSSF…SSSSTDDLDQ (128 aa). Residues 39-54 show a composition bias toward polar residues; that stretch reads GDSTSWPSPAMTTSAE. Basic and acidic residues predominate over residues 68-79; it reads KSQEDVEERELP. CBS domains are found at residues 204-265, 287-345, and 363-423; these read MATS…RSPL, CFKP…QRTL, and TFRD…HLDI. ADP-binding positions include arginine 232, 247 to 252, valine 292, 313 to 314, and lysine 332; these read MLTITD and HR. AMP is bound by residues arginine 232, 247–252, valine 292, histidine 313, 313–314, lysine 332, threonine 363, alanine 368, 389–390, 405–408, arginine 432, leucine 440, histidine 461, 461–462, and 477–480; these read MLTITD, HR, SA, SRFD, and SLSD. Residues arginine 232, 247–252, valine 292, 313–314, arginine 314, and lysine 332 contribute to the ATP site; these read MLTITD and HR. The AMPK pseudosubstrate motif lies at 300-321; the sequence is LFEAVYTLIKNRIHRLPVLDPV. Residues 405-408, arginine 432, leucine 440, and 461-462 contribute to the ADP site; these read SRFD and HR. ATP is bound by residues 405 to 408, arginine 432, leucine 440, and 461 to 462; these read SRFD and HR. In terms of domain architecture, CBS 4 spans 435–494; the sequence is CLEGVLSCQPHETLGEVIDRIAREQVHRLVLVDETQHLLGVVSLSDILQALVLSPAGIDA.

The protein belongs to the 5'-AMP-activated protein kinase gamma subunit family. AMPK is a heterotrimer of an alpha catalytic subunit (PRKAA1 or PRKAA2), a beta (PRKAB1 or PRKAB2) and a gamma non-catalytic subunits (PRKAG1, PRKAG2 or PRKAG3). Interacts with FNIP1 and FNIP2. Phosphorylated by ULK1; leading to negatively regulate AMPK activity and suggesting the existence of a regulatory feedback loop between ULK1 and AMPK. In terms of processing, glycosylated; O-GlcNAcylated by OGT, promoting the AMP-activated protein kinase (AMPK) activity.

AMP/ATP-binding subunit of AMP-activated protein kinase (AMPK), an energy sensor protein kinase that plays a key role in regulating cellular energy metabolism. In response to reduction of intracellular ATP levels, AMPK activates energy-producing pathways and inhibits energy-consuming processes: inhibits protein, carbohydrate and lipid biosynthesis, as well as cell growth and proliferation. AMPK acts via direct phosphorylation of metabolic enzymes, and by longer-term effects via phosphorylation of transcription regulators. AMPK also acts as a regulator of cellular polarity by remodeling the actin cytoskeleton; probably by indirectly activating myosin. The AMPK gamma3 subunit is a non-catalytic subunit with a regulatory role in muscle energy metabolism. It mediates binding to AMP, ADP and ATP, leading to AMPK activation or inhibition: AMP-binding results in allosteric activation of alpha catalytic subunit (PRKAA1 or PRKAA2) both by inducing phosphorylation and preventing dephosphorylation of catalytic subunits. ADP also stimulates phosphorylation, without stimulating already phosphorylated catalytic subunit. ATP promotes dephosphorylation of catalytic subunit, rendering the AMPK enzyme inactive. The protein is 5'-AMP-activated protein kinase subunit gamma-3 (PRKAG3) of Bos taurus (Bovine).